The following is a 347-amino-acid chain: Cannabinoid receptor 2 (347 aa).

Residues 1-33 (MEGCRETEVTNGSNGGLEFNPMKEYMILSSGQQ) lie on the Extracellular side of the membrane. N-linked (GlcNAc...) asparagine glycosylation is present at asparagine 11. The helical transmembrane segment at 34-59 (IAVAVLCTLMGLLSALENMAVLYIIL) threads the bilayer. Topologically, residues 60-71 (SSRRLRRKPSYL) are cytoplasmic. The helical transmembrane segment at 72 to 92 (FISSLAGADFLASVIFACNFV) threads the bilayer. Topologically, residues 93–104 (IFHVFHGVDSNA) are extracellular. The helical transmembrane segment at 105-129 (IFLLKIGSVTMTFTASVGSLLLTAV) threads the bilayer. Topologically, residues 130–149 (DRYLCLCYPPTYKALVTRGR) are cytoplasmic. A helical transmembrane segment spans residues 150–172 (ALVALCVMWVLSALISYLPLMGW). Residues 173–188 (TCCPSPCSELFPLIPN) are Extracellular-facing. A helical transmembrane segment spans residues 189–214 (DYLLGWLLFIAILFSGIIYTYGYVLW). Topologically, residues 215–246 (KAHRHVATLAEHQDRQVPGIARMRLDVRLAKT) are cytoplasmic. The chain crosses the membrane as a helical span at residues 247 to 267 (LGLVLAVLLICWFPALALMGH). Topologically, residues 268–279 (SLVTTLSDQVKE) are extracellular. The chain crosses the membrane as a helical span at residues 280–301 (AFAFCSMLCLVNSMVNPIIYAL). At 302–347 (RSGEIRSAAQHCLIGWKKYLQGLGPEGKEEGPRSSVTETEADVKTT) the chain is on the cytoplasmic side. Residues 326–347 (PEGKEEGPRSSVTETEADVKTT) form a disordered region. A phosphoserine mark is found at serine 335 and serine 336. A Phosphothreonine modification is found at threonine 338.

It belongs to the G-protein coupled receptor 1 family. As to expression, expressed by cells of hematopoietic origin. Expressed in skin in suprabasal layers and hair follicles, in brain by neurons and glial cells and by osteoblasts, osteocytes, osteoclasts (at protein level).

Its subcellular location is the cell membrane. It localises to the cell projection. The protein resides in the dendrite. It is found in the perikaryon. Heterotrimeric G protein-coupled receptor for endocannabinoid 2-arachidonoylglycerol mediating inhibition of adenylate cyclase. May function in inflammatory response, nociceptive transmission and bone homeostasis. In Mus musculus (Mouse), this protein is Cannabinoid receptor 2 (Cnr2).